The chain runs to 65 residues: Toxin Cbi1 (65 aa).

Residues 1–64 (KDGYPMDNKG…VWDRATNKCR (64 aa)) form the LCN-type CS-alpha/beta domain. Intrachain disulfides connect C11–C63, C15–C37, C22–C44, and C26–C46.

It belongs to the long (4 C-C) scorpion toxin superfamily. Sodium channel inhibitor family. Beta subfamily. In terms of tissue distribution, expressed by the venom gland.

It is found in the secreted. Its function is as follows. Beta toxins bind voltage-independently at site-4 of sodium channels (Nav) and shift the voltage of activation toward more negative potentials thereby affecting sodium channel activation and promoting spontaneous and repetitive firing. This is Toxin Cbi1 from Centruroides bicolor (Scorpion).